Consider the following 104-residue polypeptide: Vesicle-associated membrane protein 3 (104 aa).

The interval 1–23 (MTTNAPAGSSAAAGSSRRLQQTQ) is disordered. Residues 1–81 (MTTNAPAGSS…KRKYWWKNCK (81 aa)) are Cytoplasmic-facing. Over residues 7–16 (AGSSAAAGSS) the composition is skewed to low complexity. The v-SNARE coiled-coil homology domain maps to 18 to 78 (RLQQTQNQVD…AKLKRKYWWK (61 aa)). Residues K70, K72, and K81 each participate in a glycyl lysine isopeptide (Lys-Gly) (interchain with G-Cter in ubiquitin) cross-link. Residues 82–102 (MWAIGITVVVIIIIIIVVWSI) traverse the membrane as a helical; Anchor for type IV membrane protein segment. Residues 103–104 (SS) are Vesicular-facing.

It belongs to the synaptobrevin family. In terms of assembly, interacts with POPDC1 (via the C-terminus cytoplasmic tail). Interacts with BCAP31; involved in VAMP3 export from the endoplasmic reticulum. Interacts with BAIAP3; this interaction is increased in the presence of calcium. Interacts with PICALM. In terms of processing, ubiquitinated by RNF167 at Lys-70, Lys-72 and Lys-81, regulating the recycling endosome pathway.

Its subcellular location is the early endosome membrane. The protein resides in the recycling endosome membrane. It localises to the synapse. It is found in the synaptosome. Functionally, SNARE involved in vesicular transport from the late endosomes to the trans-Golgi network. This chain is Vesicle-associated membrane protein 3 (VAMP3), found in Bos taurus (Bovine).